Consider the following 101-residue polypeptide: Small ribosomal subunit protein uS10 (101 aa).

This sequence belongs to the universal ribosomal protein uS10 family. As to quaternary structure, part of the 30S ribosomal subunit.

In terms of biological role, involved in the binding of tRNA to the ribosomes. This is Small ribosomal subunit protein uS10 from Saccharopolyspora erythraea (strain ATCC 11635 / DSM 40517 / JCM 4748 / NBRC 13426 / NCIMB 8594 / NRRL 2338).